The chain runs to 397 residues: (S)-8-oxocitronellyl enol synthase ISY2 (397 aa).

Residues 36–38, 64–65, 82–83, 106–107, Q144, Y180, I207, and 214–216 contribute to the NADP(+) site; these read TGL, RR, DV, TW, and SMM. Residue Y180 is part of the active site.

It belongs to the short-chain dehydrogenases/reductases (SDR) family.

The enzyme catalyses (S)-8-oxocitronellyl enol + NADP(+) = (6E)-8-oxogeranial + NADPH + H(+). It carries out the reaction (S)-8-oxocitronellyl enol + NAD(+) = (6E)-8-oxogeranial + NADH + H(+). Its function is as follows. Iridoid synthase that catalyzes the first step in generation of the iridoid ring scaffold using the linear monoterpene (6E)-8-oxogeranial as substrate. Iridoids comprise a large family of distinctive bicyclic monoterpenes that possess a wide range of pharmacological activities, including anticancer, anti-inflammatory, antifungal and antibacterial activities. Catalyzes the conversion of the linear monoterpene (6E)-8-oxogeranial to (S)-8-oxocitronellyl enol, a precursor of nepetalactones, which are metabolites that are both insect-repellent and have euphoric effect in cats. The chain is (S)-8-oxocitronellyl enol synthase ISY2 from Nepeta cataria (Catnip).